A 467-amino-acid chain; its full sequence is UDP-N-acetylmuramate--L-alanine ligase (467 aa).

114–120 (GTHGKTT) lines the ATP pocket.

This sequence belongs to the MurCDEF family.

The protein localises to the cytoplasm. The enzyme catalyses UDP-N-acetyl-alpha-D-muramate + L-alanine + ATP = UDP-N-acetyl-alpha-D-muramoyl-L-alanine + ADP + phosphate + H(+). Its pathway is cell wall biogenesis; peptidoglycan biosynthesis. Its function is as follows. Cell wall formation. In Bradyrhizobium diazoefficiens (strain JCM 10833 / BCRC 13528 / IAM 13628 / NBRC 14792 / USDA 110), this protein is UDP-N-acetylmuramate--L-alanine ligase.